A 384-amino-acid chain; its full sequence is PqqA peptide cyclase (384 aa).

One can recognise a Radical SAM core domain in the interval 5-220 (VGLPLWLLAE…TNEYREKLKA (216 aa)). Residues Cys19, Cys23, and Cys26 each contribute to the [4Fe-4S] cluster site.

Belongs to the radical SAM superfamily. PqqE family. In terms of assembly, interacts with PqqD. The interaction is necessary for activity of PqqE. The cofactor is [4Fe-4S] cluster.

It catalyses the reaction [PQQ precursor protein] + S-adenosyl-L-methionine = E-Y cross-linked-[PQQ precursor protein] + 5'-deoxyadenosine + L-methionine + H(+). It participates in cofactor biosynthesis; pyrroloquinoline quinone biosynthesis. Functionally, catalyzes the cross-linking of a glutamate residue and a tyrosine residue in the PqqA protein as part of the biosynthesis of pyrroloquinoline quinone (PQQ). The protein is PqqA peptide cyclase of Acinetobacter baumannii (strain SDF).